Consider the following 98-residue polypeptide: Citrate lyase acyl carrier protein (98 aa).

The residue at position 14 (Ser14) is an O-(phosphoribosyl dephospho-coenzyme A)serine.

The protein belongs to the CitD family. Oligomer with a subunit composition of (alpha,beta,gamma)6.

It is found in the cytoplasm. Covalent carrier of the coenzyme of citrate lyase. This is Citrate lyase acyl carrier protein from Shigella flexneri.